Consider the following 359-residue polypeptide: Heme A synthase (359 aa).

5 helical membrane-spanning segments follow: residues 8 to 28 (IMSIWLIVSTLLLLLMIVVGG), 94 to 114 (LLGRITGIIIIIPFLIFYYLK), 124 to 144 (LLLITCLVIIQGFMGWYMVKS), 159 to 179 (GHLLLAVVIYHQLIAELLIII), and 215 to 235 (IIIFLLYTQIMFGALVAGLDA). His274 provides a ligand contact to heme. The next 3 membrane-spanning stretches (helical) occupy residues 276-296 (WFGILISCLIICYAIWLIILN), 303-323 (MGMVAACLVLVQVTTGIITLV), and 328-348 (ILAALTHQVGAILILTTFLFI). His334 provides a ligand contact to heme.

The protein belongs to the COX15/CtaA family. Type 2 subfamily. As to quaternary structure, interacts with CtaB. Heme b is required as a cofactor.

Its subcellular location is the cell membrane. It catalyses the reaction Fe(II)-heme o + 2 A + H2O = Fe(II)-heme a + 2 AH2. The protein operates within porphyrin-containing compound metabolism; heme A biosynthesis; heme A from heme O: step 1/1. Catalyzes the conversion of heme O to heme A by two successive hydroxylations of the methyl group at C8. The first hydroxylation forms heme I, the second hydroxylation results in an unstable dihydroxymethyl group, which spontaneously dehydrates, resulting in the formyl group of heme A. This Orientia tsutsugamushi (strain Ikeda) (Rickettsia tsutsugamushi) protein is Heme A synthase.